Consider the following 960-residue polypeptide: Isoleucine--tRNA ligase (960 aa).

Positions P82 to H92 match the 'HIGH' region motif. E606 contributes to the L-isoleucyl-5'-AMP binding site. Positions K647–S651 match the 'KMSKS' region motif. K650 lines the ATP pocket. C931, C934, C951, and C954 together coordinate Zn(2+).

The protein belongs to the class-I aminoacyl-tRNA synthetase family. IleS type 1 subfamily. As to quaternary structure, monomer. It depends on Zn(2+) as a cofactor.

It localises to the cytoplasm. The enzyme catalyses tRNA(Ile) + L-isoleucine + ATP = L-isoleucyl-tRNA(Ile) + AMP + diphosphate. Its function is as follows. Catalyzes the attachment of isoleucine to tRNA(Ile). As IleRS can inadvertently accommodate and process structurally similar amino acids such as valine, to avoid such errors it has two additional distinct tRNA(Ile)-dependent editing activities. One activity is designated as 'pretransfer' editing and involves the hydrolysis of activated Val-AMP. The other activity is designated 'posttransfer' editing and involves deacylation of mischarged Val-tRNA(Ile). This chain is Isoleucine--tRNA ligase, found in Gluconobacter oxydans (strain 621H) (Gluconobacter suboxydans).